The primary structure comprises 67 residues: uncharacterized protein (67 aa).

This is an uncharacterized protein from Fowlpox virus (strain NVSL) (FPV).